Consider the following 23-residue polypeptide: Unknown protein NF005 from 2D-PAGE (23 aa).

The segment at 1 to 23 (AGKARKQLSKNEDTKLKEQYIXD) is disordered. Positions 9–23 (SKNEDTKLKEQYIXD) are enriched in basic and acidic residues.

The polypeptide is Unknown protein NF005 from 2D-PAGE (Naegleria fowleri (Brain eating amoeba)).